The sequence spans 154 residues: GTP-dependent dephospho-CoA kinase (154 aa).

Residues aspartate 34, aspartate 53, and glutamate 107 each contribute to the GTP site.

Belongs to the GTP-dependent DPCK family.

It carries out the reaction 3'-dephospho-CoA + GTP = GDP + CoA + H(+). It participates in cofactor biosynthesis; coenzyme A biosynthesis. Its function is as follows. Catalyzes the GTP-dependent phosphorylation of the 3'-hydroxyl group of dephosphocoenzyme A to form coenzyme A (CoA). The sequence is that of GTP-dependent dephospho-CoA kinase from Nitrosopumilus maritimus (strain SCM1).